Reading from the N-terminus, the 165-residue chain is MSHPALTQLRALRYFDAIPALEPHLLDWLLLEDSMTKRFEQQGKRVSVTLIREAFVDQSEVEEASGLLPSESRYWLREILLCADGEPWLAGRTVVPESTLCGPEQVLQHLGKTPLGRYLFTSSTLTRDFIEIGRDATLWGRRSRLRLSGKPLLLTELFLPASPLY.

Met-35, Arg-77, Leu-115, and Glu-156 together coordinate substrate.

Belongs to the UbiC family. Monomer.

The protein resides in the cytoplasm. It carries out the reaction chorismate = 4-hydroxybenzoate + pyruvate. The protein operates within cofactor biosynthesis; ubiquinone biosynthesis. Its function is as follows. Removes the pyruvyl group from chorismate, with concomitant aromatization of the ring, to provide 4-hydroxybenzoate (4HB) for the ubiquinone pathway. The polypeptide is Chorismate pyruvate-lyase (Salmonella gallinarum (strain 287/91 / NCTC 13346)).